Here is a 278-residue protein sequence, read N- to C-terminus: Large ribosomal subunit protein uL2 (278 aa).

Disordered stretches follow at residues 1 to 58 (MAIR…GGGH) and 224 to 278 (VVMN…GKKR). A compositionally biased stretch (basic and acidic residues) spans 23-33 (EITRDHPEKSL). Over residues 37-58 (LHGRGGRNAHGRITTRHKGGGH) the composition is skewed to basic residues. The segment covering 253–268 (PEGRTRKPKKASDKLI) has biased composition (basic and acidic residues). Basic residues predominate over residues 269-278 (VRRRRTGKKR).

This sequence belongs to the universal ribosomal protein uL2 family. In terms of assembly, part of the 50S ribosomal subunit. Forms a bridge to the 30S subunit in the 70S ribosome.

In terms of biological role, one of the primary rRNA binding proteins. Required for association of the 30S and 50S subunits to form the 70S ribosome, for tRNA binding and peptide bond formation. It has been suggested to have peptidyltransferase activity; this is somewhat controversial. Makes several contacts with the 16S rRNA in the 70S ribosome. This chain is Large ribosomal subunit protein uL2, found in Mycolicibacterium vanbaalenii (strain DSM 7251 / JCM 13017 / BCRC 16820 / KCTC 9966 / NRRL B-24157 / PYR-1) (Mycobacterium vanbaalenii).